The sequence spans 150 residues: Viral late gene transcription factor 2 (150 aa).

It belongs to the chordopoxvirinae VLTF-2 family. In terms of assembly, interacts with itself. Interacts with the late transcription factors VLTF-1.

Acts with RNA polymerase to initiate transcription from late gene promoters. This Homo sapiens (Human) protein is Viral late gene transcription factor 2 (VLTF2).